A 439-amino-acid polypeptide reads, in one-letter code: SH3 domain-containing protein 1 (439 aa).

Residues 32–263 (DAVVVDEEEL…MIAEEEAIGS (232 aa)) form the BAR domain. The segment covering 277–291 (SLPQQEPNSNSSGEI) has biased composition (polar residues). Residues 277-362 (SLPQQEPNSN…SDDHHNHQLL (86 aa)) form a disordered region. Residues 318 to 358 (SPKDEMKSSPQEETKSNHQKEIKSSPQEEIKKSNGSDDHHN) show a composition bias toward basic and acidic residues. The region spanning 366–425 (DSYFLAKVVHPFDAQAPGELSLAVDDYVIVRQVAGTGWSEGEYKGKAGWFPSAYVEKQEK) is the SH3 domain.

As to quaternary structure, interacts with the auxilin-like protein AUXI1. Highly expressed in flowers. Detected in seedlings, roots, leaves and stems.

Its subcellular location is the cytoplasmic vesicle. The protein localises to the clathrin-coated vesicle. It is found in the cell membrane. It localises to the golgi apparatus. The protein resides in the trans-Golgi network. Its subcellular location is the endoplasmic reticulum. Functionally, lipid binding protein bound strongly to phosphatidic acid, phosphatidylinositol-4-phosphate and phosphatidylinositol-4,5-bisphosphate. Binds actin in vitro. Involved in trafficking and modification of clathrin-coated vesicles. The sequence is that of SH3 domain-containing protein 1 (SH3P1) from Arabidopsis thaliana (Mouse-ear cress).